The primary structure comprises 228 residues: MARLRYLGHAAFDVELEGFDGRKRRILLDPWLENPLSPVKPSDYRGARVDYIFVTHDHGDHLGNAVELARATGAKVVAVYELAEELSKEGVQAVGANIGGPLALEGIQAVFTPALHSSSKGAPTGVVVRGRDTAVYHAGDTGLFGDMRLIGELYAPDVALLPIGGHFTMGVVEALKAVELLRPRLAIPMHYNTFPEIRADPEKFKELVEATTRTKVVVLKPGDYVEYP.

It belongs to the UPF0173 family.

This Thermofilum pendens (strain DSM 2475 / Hrk 5) protein is UPF0173 metal-dependent hydrolase Tpen_1493.